Reading from the N-terminus, the 198-residue chain is Recombination protein RecR (198 aa).

A C4-type zinc finger spans residues 57–72 (CTICGHITDTDPCYIC). In terms of domain architecture, Toprim spans 80 to 175 (TTICVVQDPK…KVTRIAHGLP (96 aa)).

Belongs to the RecR family.

Its function is as follows. May play a role in DNA repair. It seems to be involved in an RecBC-independent recombinational process of DNA repair. It may act with RecF and RecO. The polypeptide is Recombination protein RecR (Geobacillus kaustophilus (strain HTA426)).